We begin with the raw amino-acid sequence, 379 residues long: ATP phosphoribosyltransferase regulatory subunit (379 aa).

Belongs to the class-II aminoacyl-tRNA synthetase family. HisZ subfamily. In terms of assembly, heteromultimer composed of HisG and HisZ subunits.

The protein localises to the cytoplasm. It participates in amino-acid biosynthesis; L-histidine biosynthesis; L-histidine from 5-phospho-alpha-D-ribose 1-diphosphate: step 1/9. Its function is as follows. Required for the first step of histidine biosynthesis. May allow the feedback regulation of ATP phosphoribosyltransferase activity by histidine. The chain is ATP phosphoribosyltransferase regulatory subunit from Paramagnetospirillum magneticum (strain ATCC 700264 / AMB-1) (Magnetospirillum magneticum).